The chain runs to 145 residues: Aminoglycoside N(6')-acetyltransferase type 1 (145 aa).

In terms of domain architecture, N-acetyltransferase spans Met1–Cys145. Substrate is bound by residues Trp22, His25, Tyr66, and Glu79. Acetyl-CoA contacts are provided by residues Ile81 to Val83 and Gln89 to Lys94. Asp115 provides a ligand contact to substrate. An acetyl-CoA-binding site is contributed by Asn120. Glu136 serves as a coordination point for substrate.

Homodimer.

It catalyses the reaction kanamycin B + acetyl-CoA = N(6')-acetylkanamycin B + CoA + H(+). Catalyzes the transfer of an acetyl group from acetyl-CoA to the 6'-amino group of aminoglycoside molecules conferring resistance to antibiotics containing the purpurosamine ring including amikacin, tobramycin, dibekacin and ribostamycin. Able to acetylate eukaryotic histone proteins. The chain is Aminoglycoside N(6')-acetyltransferase type 1 from Salmonella enteritidis.